The primary structure comprises 165 residues: Ubiquitin-fold modifier-conjugating enzyme 1 (165 aa).

Residue Cys116 is the Glycyl thioester intermediate of the active site.

It belongs to the ubiquitin-conjugating enzyme family. UFC1 subfamily.

In terms of biological role, E2-like enzyme which forms an intermediate with UFM1 via a thioester linkage. This is Ubiquitin-fold modifier-conjugating enzyme 1 from Drosophila virilis (Fruit fly).